The chain runs to 92 residues: DNA-directed RNA polymerase subunit Rpo11 (92 aa).

It belongs to the archaeal Rpo11/eukaryotic RPB11/RPC19 RNA polymerase subunit family. Part of the RNA polymerase complex.

It is found in the cytoplasm. The catalysed reaction is RNA(n) + a ribonucleoside 5'-triphosphate = RNA(n+1) + diphosphate. DNA-dependent RNA polymerase (RNAP) catalyzes the transcription of DNA into RNA using the four ribonucleoside triphosphates as substrates. The protein is DNA-directed RNA polymerase subunit Rpo11 of Saccharolobus islandicus (strain Y.N.15.51 / Yellowstone #2) (Sulfolobus islandicus).